The primary structure comprises 506 residues: Nostrin (506 aa).

The 260-residue stretch at 1–260 (MRDPLTDCSY…AISKVDVEKD (260 aa)) folds into the F-BAR domain. The residue at position 114 (Ser-114) is a Phosphoserine. Coiled-coil stretches lie at residues 160-230 (SLTQ…LNQY) and 305-334 (KLGR…ASSS). The REM-1 domain occupies 292–372 (PMDKERRKSL…SYKLSSVLAD (81 aa)). Residues 413–435 (KAESKAPAGGQNNPSSSPSGSTV) are disordered. Residues 419–435 (PAGGQNNPSSSPSGSTV) are compositionally biased toward low complexity. Residues 438–497 (ASKHLCKALYTFQARQDDELNLEKGDIVTVHEKKEEGWWFGSLKGKRGHFPAAYVEELPP) form the SH3 domain. Position 479 is a phosphoserine (Ser-479).

Homotrimer. Interacts with NOS3, DNM2, WASL and CAV1. Interacts with DAB2. Interacts (via SH3 domain) with DNM2; this interaction allows the recruitment of NOS3 to dynamin-positive structures.

The protein localises to the cell membrane. It localises to the cytoplasmic vesicle. The protein resides in the cytoplasm. Its subcellular location is the cytoskeleton. It is found in the nucleus. Functionally, multivalent adapter protein which may decrease NOS3 activity by inducing its translocation away from the plasma membrane. The sequence is that of Nostrin from Mus musculus (Mouse).